A 320-amino-acid chain; its full sequence is Cytochrome f (320 aa).

An N-terminal signal peptide occupies residues 1 to 35 (MQNRNTFSWVKEQMTRFISVSIMIYVITRTSIANA). The heme site is built by Y36, C56, C59, and H60. The chain crosses the membrane as a helical span at residues 286–306 (VQGLLFFLASVILAQIFLVLK).

It belongs to the cytochrome f family. As to quaternary structure, the 4 large subunits of the cytochrome b6-f complex are cytochrome b6, subunit IV (17 kDa polypeptide, petD), cytochrome f and the Rieske protein, while the 4 small subunits are PetG, PetL, PetM and PetN. The complex functions as a dimer. Heme serves as cofactor.

The protein localises to the plastid. It localises to the chloroplast thylakoid membrane. Functionally, component of the cytochrome b6-f complex, which mediates electron transfer between photosystem II (PSII) and photosystem I (PSI), cyclic electron flow around PSI, and state transitions. This Acorus calamus (Sweet flag) protein is Cytochrome f.